The chain runs to 64 residues: Large ribosomal subunit protein bL35 (64 aa).

The protein belongs to the bacterial ribosomal protein bL35 family.

This Streptomyces avermitilis (strain ATCC 31267 / DSM 46492 / JCM 5070 / NBRC 14893 / NCIMB 12804 / NRRL 8165 / MA-4680) protein is Large ribosomal subunit protein bL35.